The chain runs to 160 residues: Phosphopantetheine adenylyltransferase (160 aa).

Threonine 9 is a binding site for substrate. ATP is bound by residues threonine 9 to phenylalanine 10 and histidine 17. Substrate-binding residues include lysine 41, leucine 73, and arginine 87. ATP contacts are provided by residues glycine 88–arginine 90, glutamate 98, and tyrosine 123–serine 129.

Belongs to the bacterial CoaD family. Homohexamer. The cofactor is Mg(2+).

The protein resides in the cytoplasm. The catalysed reaction is (R)-4'-phosphopantetheine + ATP + H(+) = 3'-dephospho-CoA + diphosphate. It participates in cofactor biosynthesis; coenzyme A biosynthesis; CoA from (R)-pantothenate: step 4/5. Functionally, reversibly transfers an adenylyl group from ATP to 4'-phosphopantetheine, yielding dephospho-CoA (dPCoA) and pyrophosphate. The protein is Phosphopantetheine adenylyltransferase of Thiobacillus denitrificans (strain ATCC 25259 / T1).